The sequence spans 741 residues: Catalase-peroxidase 2 (741 aa).

A signal peptide spans 1 to 27 (MKINTLPTLSALTLAMSLALGAGMATA). A cross-link (tryptophyl-tyrosyl-methioninium (Trp-Tyr) (with M-255)) is located at residues 106-229 (WHSAGVYRIF…MGATQMGLIY (124 aa)). The Proton acceptor role is filled by histidine 107. The tryptophyl-tyrosyl-methioninium (Tyr-Met) (with W-106) cross-link spans 229-255 (YVNPEGPNGVPDPLASAKEIRDTFGRM). Histidine 270 is a heme b binding site.

It belongs to the peroxidase family. Peroxidase/catalase subfamily. Homodimer or homotetramer. It depends on heme b as a cofactor. In terms of processing, formation of the three residue Trp-Tyr-Met cross-link is important for the catalase, but not the peroxidase activity of the enzyme.

It catalyses the reaction H2O2 + AH2 = A + 2 H2O. It carries out the reaction 2 H2O2 = O2 + 2 H2O. Its function is as follows. Bifunctional enzyme with both catalase and broad-spectrum peroxidase activity. This is Catalase-peroxidase 2 from Shewanella oneidensis (strain ATCC 700550 / JCM 31522 / CIP 106686 / LMG 19005 / NCIMB 14063 / MR-1).